The chain runs to 295 residues: Tyrosine recombinase XerC (295 aa).

The 85-residue stretch at 1-85 (MHILLQKYYN…ALRQFLNYLV (85 aa)) folds into the Core-binding (CB) domain. Residues 106–285 (YLPKNMDMEQ…DFQHLAQVYD (180 aa)) form the Tyr recombinase domain. Catalysis depends on residues R145, K169, H237, R240, and H263. Y272 (O-(3'-phospho-DNA)-tyrosine intermediate) is an active-site residue.

Belongs to the 'phage' integrase family. XerC subfamily. As to quaternary structure, forms a cyclic heterotetrameric complex composed of two molecules of XerC and two molecules of XerD.

The protein localises to the cytoplasm. In terms of biological role, site-specific tyrosine recombinase, which acts by catalyzing the cutting and rejoining of the recombining DNA molecules. The XerC-XerD complex is essential to convert dimers of the bacterial chromosome into monomers to permit their segregation at cell division. It also contributes to the segregational stability of plasmids. The chain is Tyrosine recombinase XerC from Histophilus somni (strain 2336) (Haemophilus somnus).